A 134-amino-acid chain; its full sequence is Protein NrdI (134 aa).

It belongs to the NrdI family.

Its function is as follows. Probably involved in ribonucleotide reductase function. This chain is Protein NrdI, found in Yersinia enterocolitica serotype O:8 / biotype 1B (strain NCTC 13174 / 8081).